Here is a 408-residue protein sequence, read N- to C-terminus: Argininosuccinate synthase (408 aa).

Residues alanine 8 to threonine 16 and alanine 35 contribute to the ATP site. Residues tyrosine 86 and serine 91 each contribute to the L-citrulline site. ATP is bound at residue glycine 116. Residues threonine 118, asparagine 122, and aspartate 123 each contribute to the L-aspartate site. Asparagine 122 is a binding site for L-citrulline. The L-citrulline site is built by arginine 126, serine 177, serine 186, glutamate 263, and tyrosine 275.

It belongs to the argininosuccinate synthase family. Type 1 subfamily. As to quaternary structure, homotetramer.

It localises to the cytoplasm. It carries out the reaction L-citrulline + L-aspartate + ATP = 2-(N(omega)-L-arginino)succinate + AMP + diphosphate + H(+). It participates in amino-acid biosynthesis; L-arginine biosynthesis; L-arginine from L-ornithine and carbamoyl phosphate: step 2/3. In Lachnospira eligens (strain ATCC 27750 / DSM 3376 / VPI C15-48 / C15-B4) (Eubacterium eligens), this protein is Argininosuccinate synthase.